The sequence spans 606 residues: Glucose methanol choline oxidoreductase atC (606 aa).

An N-terminal signal peptide occupies residues 1–19 (MRVFPTYIAVSGLFGGAFA). N-linked (GlcNAc...) asparagine glycosylation is found at Asn43, Asn69, Asn87, Asn290, Asn368, Asn418, Asn421, and Asn552.

It belongs to the GMC oxidoreductase family.

The enzyme catalyses terremutin + A = terreate + AH2. Its pathway is secondary metabolite biosynthesis. Glucose methanol choline oxidoreductase; part of the gene cluster that mediates the biosynthesis of terreic acid, a quinone epoxide inhibitor of Bruton's tyrosine kinase. The first step of the pathway is the synthesis of 6-methylsalicylic acid (6-MSA) by the 6-methylsalicylic acid synthase atX. In the biosynthesis of 6-MSA, atX utilizes one acetyl-CoA and three malonyl-CoAs as its substrates and catalyzes a series of programmed reactions including Claisen condensation, reduction, aldol cyclization, and the hydrolytic cleavage that yields 6-MSA. The 6-methylsalicylate 1-monooxygenase atA then catalyzes the decarboxylative hydroxylation of 6-MSA to 3-methylcatechol. The next step is the conversion of 3-methylcatechol to 3-methyl-1,2,4-benzenetriol by cytochrome P450 monooxygenase atE, which is enhanced by cytochrome P450 monooxygenase atG. Then, the epoxidase atD catalyzes the epoxidation and hydroxyl oxidation of 3-methyl-1,2,4-benzenetriol to terremutin. Lastly, GMC oxidoreductase atC oxidizes terremutin to terreic acid. In Aspergillus terreus (strain NIH 2624 / FGSC A1156), this protein is Glucose methanol choline oxidoreductase atC.